Consider the following 238-residue polypeptide: Ribonuclease 3 (238 aa).

The RNase III domain maps to 11–136 (RARLEAAIGY…LIAAIYLDGG (126 aa)). Glu49 provides a ligand contact to Mg(2+). Asp53 is a catalytic residue. Mg(2+) is bound by residues Asp122 and Glu125. Residue Glu125 is part of the active site. The DRBM domain maps to 161–230 (DAKTELQEWA…AMKLLEREGV (70 aa)).

The protein belongs to the ribonuclease III family. As to quaternary structure, homodimer. Mg(2+) is required as a cofactor.

Its subcellular location is the cytoplasm. It carries out the reaction Endonucleolytic cleavage to 5'-phosphomonoester.. Its function is as follows. Digests double-stranded RNA. Involved in the processing of primary rRNA transcript to yield the immediate precursors to the large and small rRNAs (23S and 16S). Processes some mRNAs, and tRNAs when they are encoded in the rRNA operon. Processes pre-crRNA and tracrRNA of type II CRISPR loci if present in the organism. This chain is Ribonuclease 3, found in Rhizobium meliloti (strain 1021) (Ensifer meliloti).